We begin with the raw amino-acid sequence, 309 residues long: uncharacterized protein (309 aa).

The S4 RNA-binding domain occupies 11-87 (QRLDTFLATL…FPLDILYEDE (77 aa)). The active site involves D131.

This sequence belongs to the pseudouridine synthase RluA family.

It carries out the reaction a uridine in RNA = a pseudouridine in RNA. This is an uncharacterized protein from Mycoplasma pneumoniae (strain ATCC 29342 / M129 / Subtype 1) (Mycoplasmoides pneumoniae).